Here is a 245-residue protein sequence, read N- to C-terminus: 2,3-bisphosphoglycerate-dependent phosphoglycerate mutase (245 aa).

Residues 8-15, 21-22, arginine 60, 87-90, lysine 98, 114-115, and 183-184 contribute to the substrate site; these read RHGQSLWN, TG, ERHY, RR, and GN. The active-site Tele-phosphohistidine intermediate is the histidine 9. Catalysis depends on glutamate 87, which acts as the Proton donor/acceptor.

This sequence belongs to the phosphoglycerate mutase family. BPG-dependent PGAM subfamily.

It catalyses the reaction (2R)-2-phosphoglycerate = (2R)-3-phosphoglycerate. The protein operates within carbohydrate degradation; glycolysis; pyruvate from D-glyceraldehyde 3-phosphate: step 3/5. In terms of biological role, catalyzes the interconversion of 2-phosphoglycerate and 3-phosphoglycerate. In Bacillus cereus (strain AH187), this protein is 2,3-bisphosphoglycerate-dependent phosphoglycerate mutase.